The chain runs to 674 residues: Probable L-type lectin-domain containing receptor kinase I.5 (674 aa).

An N-terminal signal peptide occupies residues 1–22; it reads MSKGLFLIWLISSFHLISFSTS. The Extracellular segment spans residues 23 to 286; it reads SKDTSFVFNG…RPRAEHKKVQ (264 aa). Positions 25-258 are legume-lectin like; the sequence is DTSFVFNGFG…YHYLLGWSFS (234 aa). Residues Asn124, Asn181, Asn185, Asn204, and Asn225 are each glycosylated (N-linked (GlcNAc...) asparagine). Residues 287-307 traverse the membrane as a helical segment; sequence FALIIALPVILAIVVMAVLAG. The Cytoplasmic segment spans residues 308–674; it reads VYYHRKKKYA…DHEQPLEFKS (367 aa). Positions 344 to 625 constitute a Protein kinase domain; the sequence is FHKDRFLGRG…LPLPDFSPYT (282 aa). ATP is bound by residues 350-358 and Lys372; that span reads LGRGGFGEV. Asp468 functions as the Proton acceptor in the catalytic mechanism. Residues 649 to 662 show a composition bias toward low complexity; that stretch reads NWSAPSASSSSANN. A disordered region spans residues 649–674; sequence NWSAPSASSSSANNSKDHEQPLEFKS. Basic and acidic residues predominate over residues 663-674; it reads SKDHEQPLEFKS.

It in the C-terminal section; belongs to the protein kinase superfamily. Ser/Thr protein kinase family. This sequence in the N-terminal section; belongs to the leguminous lectin family.

Its subcellular location is the cell membrane. It catalyses the reaction L-seryl-[protein] + ATP = O-phospho-L-seryl-[protein] + ADP + H(+). It carries out the reaction L-threonyl-[protein] + ATP = O-phospho-L-threonyl-[protein] + ADP + H(+). The chain is Probable L-type lectin-domain containing receptor kinase I.5 (LECRK15) from Arabidopsis thaliana (Mouse-ear cress).